The sequence spans 548 residues: Membrane-associated tyrosine- and threonine-specific cdc2-inhibitory kinase (548 aa).

Residues 61–89 (PNKQRSWSQPRPQSVSFRSPQNKTPASKL) form a disordered region. Residues 63–85 (KQRSWSQPRPQSVSFRSPQNKTP) are compositionally biased toward polar residues. Residues 103–353 (FKSICKLGRG…VDWLLSLPAI (251 aa)) form the Protein kinase domain. ATP-binding positions include 109–117 (LGRGSFGEV) and Lys132. Asp226 (proton acceptor) is an active-site residue. 3 residues coordinate Mg(2+): Asn231, Asp244, and Gly246. The short motif at 376 to 392 (VYQFIVWLLSFVFQWLN) is the Membrane-association motif element. Residues 464 to 523 (SPDLLSRPSLGSTSTPRNLSPEFSMRKRSALPLTPNVSRISQDSTGKSRSPSTSHSSSGF) are disordered. A compositionally biased stretch (polar residues) spans 472–481 (SLGSTSTPRN). Position 478 is a phosphothreonine; by CDK1 (Thr478). Positions 507 to 521 (STGKSRSPSTSHSSS) are enriched in low complexity.

It belongs to the protein kinase superfamily. Ser/Thr protein kinase family. WEE1 subfamily. Interacts with CDC2-CCNB1 complex. Interacts with Mos during oocyte maturation. In terms of processing, autophosphorylated. Phosphorylated on undefined residues by RSK2 and Mos kinases. Phosphorylation at Thr-478 by cdk1 creates a docking site for plk1/plx1, leading to subsequent phosphorylation by plk1/plk1 and inhibition of the protein kinase activity kinase activity.

It is found in the endoplasmic reticulum membrane. Its subcellular location is the golgi apparatus membrane. It catalyses the reaction L-seryl-[protein] + ATP = O-phospho-L-seryl-[protein] + ADP + H(+). The catalysed reaction is L-threonyl-[protein] + ATP = O-phospho-L-threonyl-[protein] + ADP + H(+). Its activity is regulated as follows. Negatively regulated by hyperphosphorylation during mitosis. The plk1/plk1 protein kinase may be required for mitotic phosphorylation. Inactivated during oocyte maturation by phosphorylation by RSK2 and Mos kinase. In terms of biological role, acts as a negative regulator of entry into mitosis (G2 to M transition) by phosphorylation of the CDK1 kinase specifically when CDK1 is complexed to cyclins. Mediates phosphorylation of CDK1 predominantly on 'Thr-14'. Also involved in Golgi fragmentation. May be involved in phosphorylation of CDK1 on 'Tyr-15' to a lesser degree, however tyrosine kinase activity is unclear and may be indirect. This Xenopus laevis (African clawed frog) protein is Membrane-associated tyrosine- and threonine-specific cdc2-inhibitory kinase (pkmyt1).